Here is a 221-residue protein sequence, read N- to C-terminus: Protein-disulfide oxidoreductase DsbI (221 aa).

A helical membrane pass occupies residues 27–47; sequence FLWLLMAVAMGGLIILAHSFF. C56 and C59 are disulfide-bonded. Helical transmembrane passes span 64–84 and 85–105; these read FAMF…KNII and LKLI…KFSV. C128 and C154 form a disulfide bridge. The helical transmembrane segment at 189 to 209 threads the bilayer; it reads LAFYEYGAGVPAGVWAMFCTV.

The protein belongs to the DsbB family. DsbI subfamily. Interacts with DsbL.

It localises to the cell inner membrane. Functionally, required for disulfide bond formation in some proteins. Part of a redox system composed of DsbI and DsbL that mediates formation of an essential disulfide bond in AssT. The polypeptide is Protein-disulfide oxidoreductase DsbI (Lelliottia amnigena (Enterobacter amnigenus)).